A 337-amino-acid chain; its full sequence is Inositol 2-dehydrogenase 1 (337 aa).

It belongs to the Gfo/Idh/MocA family. As to quaternary structure, homotetramer.

The enzyme catalyses myo-inositol + NAD(+) = scyllo-inosose + NADH + H(+). Its function is as follows. Involved in the oxidation of myo-inositol (MI) to 2-keto-myo-inositol (2KMI or 2-inosose). The sequence is that of Inositol 2-dehydrogenase 1 from Saccharopolyspora erythraea (strain ATCC 11635 / DSM 40517 / JCM 4748 / NBRC 13426 / NCIMB 8594 / NRRL 2338).